The sequence spans 284 residues: Tropomyosin-1 (284 aa).

The stretch at M1–Y284 forms a coiled coil. The disordered stretch occupies residues E103 to E131.

The protein belongs to the tropomyosin family. In terms of assembly, homodimer.

Its function is as follows. Tropomyosin, in association with the troponin complex, plays a central role in the calcium dependent regulation of muscle contraction. This chain is Tropomyosin-1, found in Biomphalaria glabrata (Bloodfluke planorb).